The sequence spans 301 residues: Diaminopimelate epimerase (301 aa).

Substrate contacts are provided by asparagine 15, glutamine 47, and asparagine 67. Cysteine 76 (proton donor) is an active-site residue. Substrate-binding positions include 77-78 (GN), asparagine 163, asparagine 197, and 215-216 (ER). The Proton acceptor role is filled by cysteine 224. 225-226 (GS) lines the substrate pocket.

The protein belongs to the diaminopimelate epimerase family. As to quaternary structure, homodimer.

The protein resides in the cytoplasm. It carries out the reaction (2S,6S)-2,6-diaminopimelate = meso-2,6-diaminopimelate. Its pathway is amino-acid biosynthesis; L-lysine biosynthesis via DAP pathway; DL-2,6-diaminopimelate from LL-2,6-diaminopimelate: step 1/1. Its function is as follows. Catalyzes the stereoinversion of LL-2,6-diaminopimelate (L,L-DAP) to meso-diaminopimelate (meso-DAP), a precursor of L-lysine and an essential component of the bacterial peptidoglycan. The sequence is that of Diaminopimelate epimerase from Rhizobium rhizogenes (strain K84 / ATCC BAA-868) (Agrobacterium radiobacter).